The primary structure comprises 229 residues: Cytochrome c oxidase subunit 2 (229 aa).

The Mitochondrial intermembrane segment spans residues 1–26 (MANWTQLGLQDASSPLMEELIYFHDY). Residues 27–48 (TLIILTLITILVFYGLASLLFS) traverse the membrane as a helical segment. Residues 49–62 (SNTNRFFLEGQGLE) lie on the Mitochondrial matrix side of the membrane. A helical membrane pass occupies residues 63-82 (TVWTIIPAVILIFIALPSLQ). At 83–229 (LLYLMDEVNN…ETWVSNFITE (147 aa)) the chain is on the mitochondrial intermembrane side. Histidine 161, cysteine 196, glutamate 198, cysteine 200, histidine 204, and methionine 207 together coordinate Cu cation. Mg(2+) is bound at residue glutamate 198.

This sequence belongs to the cytochrome c oxidase subunit 2 family. As to quaternary structure, component of the cytochrome c oxidase (complex IV, CIV), a multisubunit enzyme composed of a catalytic core of 3 subunits and several supernumerary subunits. The complex exists as a monomer or a dimer and forms supercomplexes (SCs) in the inner mitochondrial membrane with ubiquinol-cytochrome c oxidoreductase (cytochrome b-c1 complex, complex III, CIII). Cu cation serves as cofactor.

Its subcellular location is the mitochondrion inner membrane. It carries out the reaction 4 Fe(II)-[cytochrome c] + O2 + 8 H(+)(in) = 4 Fe(III)-[cytochrome c] + 2 H2O + 4 H(+)(out). Its function is as follows. Component of the cytochrome c oxidase, the last enzyme in the mitochondrial electron transport chain which drives oxidative phosphorylation. The respiratory chain contains 3 multisubunit complexes succinate dehydrogenase (complex II, CII), ubiquinol-cytochrome c oxidoreductase (cytochrome b-c1 complex, complex III, CIII) and cytochrome c oxidase (complex IV, CIV), that cooperate to transfer electrons derived from NADH and succinate to molecular oxygen, creating an electrochemical gradient over the inner membrane that drives transmembrane transport and the ATP synthase. Cytochrome c oxidase is the component of the respiratory chain that catalyzes the reduction of oxygen to water. Electrons originating from reduced cytochrome c in the intermembrane space (IMS) are transferred via the dinuclear copper A center (CU(A)) of subunit 2 and heme A of subunit 1 to the active site in subunit 1, a binuclear center (BNC) formed by heme A3 and copper B (CU(B)). The BNC reduces molecular oxygen to 2 water molecules using 4 electrons from cytochrome c in the IMS and 4 protons from the mitochondrial matrix. The sequence is that of Cytochrome c oxidase subunit 2 (COII) from Patiria pectinifera (Starfish).